Here is a 208-residue protein sequence, read N- to C-terminus: Methenyltetrahydrofolate cyclohydrolase (208 aa).

A helical transmembrane segment spans residues 25 to 46 (GAAAISGAMGAALVSMVCNLTI).

It belongs to the cyclodeaminase/cyclohydrolase family. As to quaternary structure, homodimer.

It is found in the membrane. The catalysed reaction is (6R)-5,10-methenyltetrahydrofolate + H2O = (6R)-10-formyltetrahydrofolate + H(+). It participates in one-carbon metabolism; formaldehyde assimilation via serine pathway. Functionally, required for both C1 and C2 metabolism. The polypeptide is Methenyltetrahydrofolate cyclohydrolase (fchA) (Methylorubrum extorquens (strain ATCC 14718 / DSM 1338 / JCM 2805 / NCIMB 9133 / AM1) (Methylobacterium extorquens)).